Here is a 238-residue protein sequence, read N- to C-terminus: Ribonuclease PH (238 aa).

Phosphate is bound by residues R86 and 124-126 (GTR).

It belongs to the RNase PH family. In terms of assembly, homohexameric ring arranged as a trimer of dimers.

The catalysed reaction is tRNA(n+1) + phosphate = tRNA(n) + a ribonucleoside 5'-diphosphate. Functionally, phosphorolytic 3'-5' exoribonuclease that plays an important role in tRNA 3'-end maturation. Removes nucleotide residues following the 3'-CCA terminus of tRNAs; can also add nucleotides to the ends of RNA molecules by using nucleoside diphosphates as substrates, but this may not be physiologically important. Probably plays a role in initiation of 16S rRNA degradation (leading to ribosome degradation) during starvation. This Vibrio parahaemolyticus serotype O3:K6 (strain RIMD 2210633) protein is Ribonuclease PH.